Here is a 320-residue protein sequence, read N- to C-terminus: Cytochrome f (320 aa).

A signal peptide spans 1–35 (MQTRNTFSWIKEQITRSISASLMIYIITRTSISNA). Positions 36, 56, 59, and 60 each coordinate heme. Residues 286–306 (VQGLLFFFAAVILAQIFLVLK) traverse the membrane as a helical segment.

The protein belongs to the cytochrome f family. In terms of assembly, the 4 large subunits of the cytochrome b6-f complex are cytochrome b6, subunit IV (17 kDa polypeptide, petD), cytochrome f and the Rieske protein, while the 4 small subunits are PetG, PetL, PetM and PetN. The complex functions as a dimer. Requires heme as cofactor.

It localises to the plastid. It is found in the chloroplast thylakoid membrane. Component of the cytochrome b6-f complex, which mediates electron transfer between photosystem II (PSII) and photosystem I (PSI), cyclic electron flow around PSI, and state transitions. This Helianthus annuus (Common sunflower) protein is Cytochrome f.